A 207-amino-acid chain; its full sequence is Outer-membrane lipoprotein carrier protein (207 aa).

The signal sequence occupies residues 1-21 (MRAIRMLLVSALTLGSVTAYA).

Belongs to the LolA family. Monomer.

The protein resides in the periplasm. Participates in the translocation of lipoproteins from the inner membrane to the outer membrane. Only forms a complex with a lipoprotein if the residue after the N-terminal Cys is not an aspartate (The Asp acts as a targeting signal to indicate that the lipoprotein should stay in the inner membrane). The polypeptide is Outer-membrane lipoprotein carrier protein (Pseudomonas putida (strain ATCC 47054 / DSM 6125 / CFBP 8728 / NCIMB 11950 / KT2440)).